The following is a 449-amino-acid chain: MITDQNSKPQQGELPTTHIDALTNSFSQFLRIEATSGAVLLLATVVALTLSNSPWSDGFRSLWETPIGIQIGAFQFLRSLRDLINDGLMTLFFFIVALEIKREVVLGELRNPRMVAFSVVAAAGGMLVPMGLYLALQHGQPGQHGWGVVMPTDTAFVIGCLALLGSRVPPGLRVFLLSLAVVDDLAAILVVAVGYSRSIDWTALALGAVGLVIIRGMALLGVRNIRVYFLAGAIIWLAVNASGIHATIVGVILGLMTPTAGWVSDQRLGEILRKVLSYPPGDHWSGDTEDNRALQVAGIAVRETLSPVERLEAMLHPWVAFGVMPLFALANAGVSITIKGLINPVSLAVMAGFVLGKPIGVTAFAWLGVRTGVAIRPAGLTWGGLVGGALLTGIGFTMALFIAGQAFQDATLNAAKLGILAASVVSSVAGLTLLCMFPKRDQTLDADFH.

11 consecutive transmembrane segments (helical) span residues 32–52 (IEAT…TLSN), 87–107 (GLMT…VVLG), 114–134 (MVAF…GLYL), 145–165 (GWGV…ALLG), 174–194 (VFLL…VAVG), 202–222 (TALA…LLGV), 233–253 (AIIW…GVIL), 318–338 (WVAF…SITI), 347–367 (LAVM…FAWL), 382–402 (WGGL…ALFI), and 417–437 (LGIL…LCMF).

The protein belongs to the NhaA Na(+)/H(+) (TC 2.A.33) antiporter family.

The protein resides in the cell inner membrane. It catalyses the reaction Na(+)(in) + 2 H(+)(out) = Na(+)(out) + 2 H(+)(in). Its function is as follows. Na(+)/H(+) antiporter that extrudes sodium in exchange for external protons. This Acidiphilium cryptum (strain JF-5) protein is Na(+)/H(+) antiporter NhaA 1.